The primary structure comprises 267 residues: RWD domain-containing protein 3 (267 aa).

The 108-residue stretch at 7-114 folds into the RWD domain; sequence EELSVLAAIF…LWIQQNLRHI (108 aa). 2 interaction with UBE2I/UBC9 regions span residues 13 to 15 and 100 to 102; these read AAI and VHE.

As to quaternary structure, isoform 1 and isoform 2 interact with UBE2I/UBC9. Isoform 1 shows a greater interaction with NFKBIA and HIF1A as compared to isoform 2. Isoform 2 interacts with NCOA2 and NR3C1. Isoform 1 and isoform 2 are expressed in glioma tumors (at protein level). Expressed in a wide number of tissues with highest expression in cerebellum, pituitary, heart, kidney, liver, stomach, pancreas, prostate and spleen. Low levels in thalamus, spinal cord, esophagus, thymus, lung and peripheral blood leukocytes. A higher level expression seen in pituitary tumors as compared to the pituitary gland.

The protein localises to the nucleus. It localises to the cytoplasm. Functionally, enhancer of SUMO conjugation. Via its interaction with UBE2I/UBC9, increases SUMO conjugation to proteins by promoting the binding of E1 and E2 enzymes, thioester linkage between SUMO and UBE2I/UBC9 and transfer of SUMO to specific target proteins which include HIF1A, PIAS, NFKBIA, NR3C1 and TOP1. Isoform 1 and isoform 2 positively regulate the NF-kappa-B signaling pathway by enhancing the sumoylation of NF-kappa-B inhibitor alpha (NFKBIA), promoting its stabilization which consequently leads to an increased inhibition of NF-kappa-B transcriptional activity. Isoform 1 and isoform 2 negatively regulate the hypoxia-inducible factor-1 alpha (HIF1A) signaling pathway by increasing the sumoylation of HIF1A, promoting its stabilization, transcriptional activity and the expression of its target gene VEGFA during hypoxia. Isoform 2 promotes the sumoylation and transcriptional activity of the glucocorticoid receptor NR3C1 and enhances the interaction of SUMO1 and NR3C1 with UBE2I/UBC9. Has no effect on ubiquitination. This is RWD domain-containing protein 3 (RWDD3) from Homo sapiens (Human).